The sequence spans 263 residues: Proenkephalin-A (263 aa).

Positions 1–24 (MARFLGLCTWLLALGPGLLATVRA) are cleaved as a signal peptide. Cystine bridges form between Cys26-Cys48, Cys30-Cys52, and Cys33-Cys65. 2 consecutive propeptides follow at residues 192–203 (SPHLEDETKELQ) and 213–223 (VGRPEWWMDYQ). Position 247 is a phosphoserine (Ser247).

Belongs to the opioid neuropeptide precursor family. In terms of processing, proenkephalin-A is cleaved by CTSL to generate Met-enkephalin. Processed and degraded by ACE. Post-translationally, probably cleaved by ACE. In terms of processing, processed by ACE to generate Met-enkephalin in the nucleus accumbens of the brain. The N-terminal domain contains 6 conserved cysteines thought to be involved in disulfide bonding and/or processing. Secreted by neuroendocrine chromaffin cells through cromaffin granules.

The protein resides in the cytoplasmic vesicle. It is found in the secretory vesicle. Its subcellular location is the chromaffin granule lumen. It localises to the secreted. In terms of biological role, neuropeptide that competes with and mimic the effects of opiate drugs. They play a role in a number of physiologic functions, including pain perception and responses to stress. Met-enkephalin-Arg-Phe neuropeptide acts as a strong ligand of Mu-type opioid receptor OPRM1. Met-enkephalin-Arg-Phe-binding to OPRM1 in the nucleus accumbens of the brain increases activation of OPRM1, leading to long-term synaptic depression of glutamate release. Functionally, increases glutamate release in the striatum and decreases GABA concentration in the striatum. Its function is as follows. Increases glutamate release in the striatum. In terms of biological role, enkelytin possesses antibacterial activity against Gram-positive bacteria such as Micrococcus luteus and Bacillus megaterium. This is Proenkephalin-A (PENK) from Bos taurus (Bovine).